The chain runs to 109 residues: Ubiquitin-related modifier 1 homolog (109 aa).

Position 109 is a 1-thioglycine (Gly109). A Glycyl lysine isopeptide (Gly-Lys) (interchain with K-? in acceptor proteins) cross-link involves residue Gly109.

Belongs to the URM1 family. Post-translationally, C-terminal thiocarboxylation occurs in 2 steps, it is first acyl-adenylated (-COAMP) via the hesA/moeB/thiF part of the MOCS3 homolog, then thiocarboxylated (-COSH) via the rhodanese domain of the MOCS3 homolog.

The protein localises to the cytoplasm. Its pathway is tRNA modification; 5-methoxycarbonylmethyl-2-thiouridine-tRNA biosynthesis. Its function is as follows. Acts as a sulfur carrier required for 2-thiolation of mcm(5)S(2)U at tRNA wobble positions of cytosolic tRNA(Lys), tRNA(Glu) and tRNA(Gln). Serves as sulfur donor in tRNA 2-thiolation reaction by being thiocarboxylated (-COSH) at its C-terminus by MOCS3. The sulfur is then transferred to tRNA to form 2-thiolation of mcm(5)S(2)U. Also acts as a ubiquitin-like protein (UBL) that is covalently conjugated via an isopeptide bond to lysine residues of target proteins. The thiocarboxylated form serves as substrate for conjugation and oxidative stress specifically induces the formation of UBL-protein conjugates. In Anopheles gambiae (African malaria mosquito), this protein is Ubiquitin-related modifier 1 homolog.